We begin with the raw amino-acid sequence, 754 residues long: Aspartyl/asparaginyl beta-hydroxylase (754 aa).

Residues 1 to 48 are disordered; it reads MAPRKNAKGGGGNSSSSSSGSPTGCTSGGSSSPGARRETKQGGLKNGR. Topologically, residues 1 to 56 are cytoplasmic; that stretch reads MAPRKNAKGGGGNSSSSSSGSPTGCTSGGSSSPGARRETKQGGLKNGRKGGLSGSS. Residues 14 to 34 are compositionally biased toward low complexity; sequence SSSSSSGSPTGCTSGGSSSPG. A Phosphoserine modification is found at S15. A helical; Signal-anchor for type II membrane protein transmembrane segment spans residues 57–77; the sequence is FFTWFMVIALLGVWTSVAVVW. Residues 78–754 lie on the Lumenal side of the membrane; it reads FDLVDYEEVL…PHQRRSLPAI (677 aa). N96 is a glycosylation site (N-linked (GlcNAc...) asparagine). Ca(2+) contacts are provided by D109, D111, D113, D115, and D120. 2 disordered regions span residues 176-197 and 247-326; these read VYSE…ELQP and EQEN…KKKK. Composition is skewed to basic and acidic residues over residues 261 to 284 and 309 to 318; these read DAER…DHAV and TNKKADEPGK. TPR repeat units lie at residues 337–370, 378–411, 450–483, 485–517, and 521–553; these read IKAE…YPQS, AQCE…PDAP, TALK…TPND, FAKV…GDPG, and GRFY…GHFA. N-linked (GlcNAc...) asparagine glycosylation is present at N466. W621 is a 2-oxoglutarate binding site. A disulfide bond links C637 and C644. S664 provides a ligand contact to 2-oxoglutarate. H675 contributes to the Fe cation binding site. Residue 684-686 participates in 2-oxoglutarate binding; the sequence is RMH. N702 carries an N-linked (GlcNAc...) asparagine glycan. H721 is a Fe cation binding site. R731 is a binding site for 2-oxoglutarate.

It belongs to the aspartyl/asparaginyl beta-hydroxylase family. Monomer. Fe cation is required as a cofactor. Post-translationally, might be processed to the 56 kDa (AA 289-754) or 52 kDa (AA 311-754) forms in the lumen of the endoplasmic reticulum.

The protein localises to the endoplasmic reticulum membrane. The enzyme catalyses L-aspartyl-[protein] + 2-oxoglutarate + O2 = 3-hydroxy-L-aspartyl-[protein] + succinate + CO2. Functionally, specifically hydroxylates an Asp or Asn residue in certain epidermal growth factor-like (EGF) domains of a number of proteins. The polypeptide is Aspartyl/asparaginyl beta-hydroxylase (ASPH) (Bos taurus (Bovine)).